A 1003-amino-acid polypeptide reads, in one-letter code: Glutamate receptor ionotropic, NMDA 3B (1003 aa).

A signal peptide spans 1–24 (MECVQTLWLSLALALARGSWVVRG). The Extracellular segment spans residues 25-574 (HPQPCGVPTR…PIGAFMWPLH (550 aa)). N-linked (GlcNAc...) asparagine glycans are attached at residues N69, N212, N344, N451, and N465. 2 cysteine pairs are disulfide-bonded: C439/C475 and C445/C476. Glycine is bound by residues S531, S533, and R538. 2 residues coordinate D-serine: S533 and R538. Residues 575 to 594 (WSMWVGVFAALHLTALFLTL) form a helical membrane-spanning segment. At 595 to 615 (YEWRSPYGLTPRGRNRGTVFS) the chain is on the cytoplasmic side. The discontinuously helical intramembrane region spans 616-627 (YSSALNLCYAIL). At 628–641 (FGRTVSSKTPKCPT) the chain is on the cytoplasmic side. Residues 642–661 (GRFLMNLWAIFCLLVLSSYT) traverse the membrane as a helical segment. The Extracellular segment spans residues 662 to 832 (ANLAAVMVGD…TLQMGVYHLS (171 aa)). S701 contacts glycine. The D-serine site is built by S701, A702, and D745. D745 is a binding site for glycine. N786 is a glycosylation site (N-linked (GlcNAc...) asparagine). A helical transmembrane segment spans residues 833–848 (GLFVLLCLGLGSALLT). Topologically, residues 849 to 1003 (SLGEHVFYRL…RLLHAAPAES (155 aa)) are cytoplasmic. Positions 883–912 (LNTGPPEGQQERAEQECSGPKEEQPAADGA) are disordered. Basic and acidic residues predominate over residues 891 to 906 (QQERAEQECSGPKEEQ). Positions 947-986 (SNGPGVQAELRELELRIEAARERLRSALLRRGELRAQLGD) form a coiled coil. Positions 952–985 (VQAELRELELRIEAARERLRSALLRRGELRAQLG) are involved in the trafficking and surface expression of NMDARs.

Belongs to the glutamate-gated ion channel (TC 1.A.10.1) family. NR3B/GRIN3B subfamily. As to quaternary structure, forms heterotetrameric channels that contain at least two GluN1 subunits and at least a combination of one GluN2 and one GluN3 subunits (in vitro). Forms heterotetrameric channels composed of two GluN1/zeta subunits (GRIN1), and two identical GluN3 subunits (GRIN3A or GRIN3B) (in vitro). Does not form functional homomeric channels. As to expression, expressed in the facial nucleus and the ambiguus nucleus of the brainstem, pons, medulla, spinal cord and cerebellum.

It is found in the cell membrane. It localises to the postsynaptic cell membrane. The enzyme catalyses Ca(2+)(in) = Ca(2+)(out). It carries out the reaction Na(+)(in) = Na(+)(out). Functionally, component of a non-conventional N-methyl-D-aspartate (NMDA) receptors (NMDARs) that function as heterotetrameric, ligand-gated cation channels with low calcium permeability and low voltage-dependent block by Mg(2+). Forms glutamatergic receptor complexes with GluN1 and GluN2 subunits which are activated by glycine binding to the GluN1 and GluN3 subunits and L-glutamate binding to GluN2 subunits. Forms excitatory glycinergic receptor complexes with GluN1 alone which are activated by glycine binding to the GluN1 and GluN3 subunits. GluN3B subunit also binds D-serine and, in the absence of glycine, activates glycinergic receptor complexes, but with lower efficacy than glycine. Each GluN3 subunit confers differential attributes to channel properties, including activation, deactivation and desensitization kinetics, pH sensitivity, Ca2(+) permeability, and binding to allosteric modulators. This Mus musculus (Mouse) protein is Glutamate receptor ionotropic, NMDA 3B.